We begin with the raw amino-acid sequence, 75 residues long: Large ribosomal subunit protein bL28 (75 aa).

It belongs to the bacterial ribosomal protein bL28 family.

The chain is Large ribosomal subunit protein bL28 from Buchnera aphidicola subsp. Acyrthosiphon pisum (strain 5A).